Here is a 212-residue protein sequence, read N- to C-terminus: Adenylate kinase (212 aa).

10-15 (GAGKGT) is an ATP binding site. Positions 30–59 (STGDMFRAAMVNQTEMGVLAKSYIDKGELV) are NMP. AMP-binding positions include threonine 31, arginine 36, 57–59 (ELV), 86–89 (GYPR), and glutamine 93. The segment at 127–159 (GRIIHRVTGETFHKVFNPPVDYKEEDYYQREDD) is LID. Residues arginine 128 and 137 to 138 (TF) contribute to the ATP site. 2 residues coordinate AMP: arginine 156 and arginine 167. Glutamine 195 lines the ATP pocket.

It belongs to the adenylate kinase family. Monomer.

The protein resides in the cytoplasm. It catalyses the reaction AMP + ATP = 2 ADP. The protein operates within purine metabolism; AMP biosynthesis via salvage pathway; AMP from ADP: step 1/1. In terms of biological role, catalyzes the reversible transfer of the terminal phosphate group between ATP and AMP. Plays an important role in cellular energy homeostasis and in adenine nucleotide metabolism. The polypeptide is Adenylate kinase (Streptococcus pneumoniae (strain 70585)).